A 378-amino-acid chain; its full sequence is Chaperone protein DnaJ (378 aa).

The J domain occupies 5-70 (DYYEVLSVSR…DKKAAYDQFG (66 aa)). The CR-type zinc finger occupies 133 to 211 (GLTKELRIPT…CHGEGRVEKS (79 aa)). 8 residues coordinate Zn(2+): C146, C149, C163, C166, C185, C188, C199, and C202. CXXCXGXG motif repeat units follow at residues 146 to 153 (CDSCDGSG), 163 to 170 (CGTCHGQG), 185 to 192 (CPTCHGRG), and 199 to 206 (CNKCHGEG).

It belongs to the DnaJ family. In terms of assembly, homodimer. Requires Zn(2+) as cofactor.

It localises to the cytoplasm. Its function is as follows. Participates actively in the response to hyperosmotic and heat shock by preventing the aggregation of stress-denatured proteins and by disaggregating proteins, also in an autonomous, DnaK-independent fashion. Unfolded proteins bind initially to DnaJ; upon interaction with the DnaJ-bound protein, DnaK hydrolyzes its bound ATP, resulting in the formation of a stable complex. GrpE releases ADP from DnaK; ATP binding to DnaK triggers the release of the substrate protein, thus completing the reaction cycle. Several rounds of ATP-dependent interactions between DnaJ, DnaK and GrpE are required for fully efficient folding. Also involved, together with DnaK and GrpE, in the DNA replication of plasmids through activation of initiation proteins. The chain is Chaperone protein DnaJ from Shewanella sediminis (strain HAW-EB3).